The primary structure comprises 1141 residues: DNA-directed RNA polymerase subunit beta (1141 aa).

The protein belongs to the RNA polymerase beta chain family. The RNAP catalytic core consists of 2 alpha, 1 beta, 1 beta' and 1 omega subunit. When a sigma factor is associated with the core the holoenzyme is formed, which can initiate transcription.

The catalysed reaction is RNA(n) + a ribonucleoside 5'-triphosphate = RNA(n+1) + diphosphate. Functionally, DNA-dependent RNA polymerase catalyzes the transcription of DNA into RNA using the four ribonucleoside triphosphates as substrates. This chain is DNA-directed RNA polymerase subunit beta, found in Parafrankia sp. (strain EAN1pec).